A 341-amino-acid chain; its full sequence is Glucokinase (341 aa).

Residue 7-12 (GDIGGT) coordinates ATP.

The protein belongs to the bacterial glucokinase family.

Its subcellular location is the cytoplasm. The enzyme catalyses D-glucose + ATP = D-glucose 6-phosphate + ADP + H(+). The sequence is that of Glucokinase from Nostoc punctiforme (strain ATCC 29133 / PCC 73102).